Consider the following 181-residue polypeptide: Adenine phosphoribosyltransferase (181 aa).

The protein belongs to the purine/pyrimidine phosphoribosyltransferase family. Homodimer.

It localises to the cytoplasm. The enzyme catalyses AMP + diphosphate = 5-phospho-alpha-D-ribose 1-diphosphate + adenine. Its pathway is purine metabolism; AMP biosynthesis via salvage pathway; AMP from adenine: step 1/1. Functionally, catalyzes a salvage reaction resulting in the formation of AMP, that is energically less costly than de novo synthesis. The sequence is that of Adenine phosphoribosyltransferase from Aeromonas salmonicida (strain A449).